The primary structure comprises 127 residues: Aspartate 1-decarboxylase (127 aa).

The active-site Schiff-base intermediate with substrate; via pyruvic acid is the serine 25. The residue at position 25 (serine 25) is a Pyruvic acid (Ser). Position 57 (threonine 57) interacts with substrate. Tyrosine 58 functions as the Proton donor in the catalytic mechanism. 73-75 provides a ligand contact to substrate; the sequence is GAA.

Belongs to the PanD family. In terms of assembly, heterooctamer of four alpha and four beta subunits. Requires pyruvate as cofactor. Post-translationally, is synthesized initially as an inactive proenzyme, which is activated by self-cleavage at a specific serine bond to produce a beta-subunit with a hydroxyl group at its C-terminus and an alpha-subunit with a pyruvoyl group at its N-terminus.

It is found in the cytoplasm. It catalyses the reaction L-aspartate + H(+) = beta-alanine + CO2. Its pathway is cofactor biosynthesis; (R)-pantothenate biosynthesis; beta-alanine from L-aspartate: step 1/1. Functionally, catalyzes the pyruvoyl-dependent decarboxylation of aspartate to produce beta-alanine. The polypeptide is Aspartate 1-decarboxylase (Desulfitobacterium hafniense (strain DSM 10664 / DCB-2)).